The chain runs to 128 residues: Glycine cleavage system H protein (128 aa).

One can recognise a Lipoyl-binding domain in the interval 24-106 (LVRIGISEFA…HGEGWLLIIR (83 aa)). Residue lysine 65 is modified to N6-lipoyllysine.

Belongs to the GcvH family. In terms of assembly, the glycine cleavage system is composed of four proteins: P, T, L and H. (R)-lipoate serves as cofactor.

The glycine cleavage system catalyzes the degradation of glycine. The H protein shuttles the methylamine group of glycine from the P protein to the T protein. This is Glycine cleavage system H protein from Prochlorococcus marinus (strain NATL1A).